We begin with the raw amino-acid sequence, 162 residues long: ATP synthase subunit b (162 aa).

Residues 16–36 form a helical membrane-spanning segment; the sequence is GISGGTIIYQLLMFIILLALL.

The protein belongs to the ATPase B chain family. As to quaternary structure, F-type ATPases have 2 components, F(1) - the catalytic core - and F(0) - the membrane proton channel. F(1) has five subunits: alpha(3), beta(3), gamma(1), delta(1), epsilon(1). F(0) has three main subunits: a(1), b(2) and c(10-14). The alpha and beta chains form an alternating ring which encloses part of the gamma chain. F(1) is attached to F(0) by a central stalk formed by the gamma and epsilon chains, while a peripheral stalk is formed by the delta and b chains.

It is found in the cell membrane. F(1)F(0) ATP synthase produces ATP from ADP in the presence of a proton or sodium gradient. F-type ATPases consist of two structural domains, F(1) containing the extramembraneous catalytic core and F(0) containing the membrane proton channel, linked together by a central stalk and a peripheral stalk. During catalysis, ATP synthesis in the catalytic domain of F(1) is coupled via a rotary mechanism of the central stalk subunits to proton translocation. Functionally, component of the F(0) channel, it forms part of the peripheral stalk, linking F(1) to F(0). The chain is ATP synthase subunit b from Bacillus caldotenax.